A 54-amino-acid polypeptide reads, in one-letter code: Potassium channel toxin alpha-KTx 14.5 (54 aa).

Residues 1 to 23 form the signal peptide; the sequence is MKIFFAILLILAVCSMAIWTVNG. Disulfide bonds link cysteine 30–cysteine 46, cysteine 36–cysteine 51, and cysteine 40–cysteine 53.

This sequence belongs to the short scorpion toxin superfamily. Potassium channel inhibitor family. Alpha-KTx 14 subfamily. Expressed by the venom gland.

It localises to the secreted. Functionally, inhibits potassium channels. May be active towards small conductance calcium-activated potassium channels (KCNN, SK), and less active towards voltage-gated potassium channels (Kv/KCN). This is Potassium channel toxin alpha-KTx 14.5 from Mesobuthus gibbosus (Mediterranean checkered scorpion).